Reading from the N-terminus, the 1409-residue chain is MKSLLDLFKQFTPDEHFDAIKIGMASPEKIRSWSFGEVKKPETINYRTFKPERDGLFCAKIFGPIKDYECLCGKYKRLKHRGVICEKCGVEVTQTKVRRERMGHIDLAAPCAHIWFLKSLPSRLGLVLDMTLRDIERVLYFEAYVITDPGMTPLKKFGIMSEDDYDAKRKEYGDEFVAKMGAEGIKDLLEGIELDSEIERLRGDLTGSEVKVKKNSKRLKVLEAFRKSGIKPEWMVLDVLPVLPPDLRPLVPLDGGRFATSDLNDLYRRVINRNSRLRRLLELKAPEIIARNEKRMLQEAVDSLLDNGRRGKAMTGANKRALKSLADMIKGKSGRFRQNLLGKRVDYSGRSVIVVGPTLKLHQCGLPKLMALELFKPFIFSRLEAMGIATTIKAAKKEVESGTPVVWDILEEVIKEHPVMLNRAPTLHRLGIQAFEPILIEGKAIQLHPLVCAAFNADFDGDQMAVHVPLSVEAQMEARTLMLASNNVLFPASGEPSIVPSQDVVLGLYYTTRDRINGKGEGLIFSDIGEVQRALDANEVELTAKVAVRITEYTKDKETGEFTPSTSLVDTTVGRALLSEILPKGLPFSNINKALKKKEISKLINVSFRKCGLKETVVFADKLLQNGFRLATKAGISIAIDDMLVPAEKHGIIERSAKEVKEIEQQYVSGLVTSGERYNKVVDIWGKAGDEVSKVMMAKLSKQKVIDRHGKEVEQESFNSIYMMADSGARGSAAQIRQVAGMRGLMAKPDGSIIETPITANFREGLNVLEYFISTHGARKGLADTALKTANSGYLTRRLVDVTQDLVVTEQDCGTHGGYLMRAIVEGGEVIESLRDRILGRSAADDVLHPENRSVLLKAGEMFDEDNIEELEAQGVDEVKVRTALTCETRFGICATCYGRDLGRGGLINIGEAVGVIAAQSIGEPGTQLTMRTFHIGGAASRAAVASSVEAKSNGVIGFNATMRYVTNSKNELVVIARSGEIVIHDEHGRERERHKVPYGAILAVKADQQIKAGHVLANWDPLTRPIITEFAGKTQFENVEEGLTVAKQVDEVTGLSTLVVIDPKRRGAAKVVRPQVKLIDASGAEVKIPGTDHSVTIGFPIGALVQIRDGQDVGPGEVLARIPVEGQKTRDITGGLPRVAELFEARSPKDKGMLAEMTGTVSFGKETKGKIRLQITDPEGTVWEDLVPKEKNILVHEGQVVNKGESVVDGPADPQDILRLLGSEELARYIVDEVQDVYRLQGVKINDKHIEVIVRQMLRRVVVDNIGETGYISGEQVERSEMLNTNDALRAEGKIPATFTNLLLGITKASLSTDSFISAASFQETTRVLTEAAIMGKRDELRGLKENVIVGRLIPAGTGMAYHQARKAKDQMDEAERRAIAESEAAELAGSTSDVSTTADASEGAASE.

Zn(2+) contacts are provided by C70, C72, C85, and C88. Positions 458, 460, and 462 each coordinate Mg(2+). Zn(2+) is bound by residues C813, C887, C894, and C897. Residues 1385–1403 show a composition bias toward low complexity; the sequence is EAAELAGSTSDVSTTADAS. Positions 1385 to 1409 are disordered; the sequence is EAAELAGSTSDVSTTADASEGAASE.

Belongs to the RNA polymerase beta' chain family. As to quaternary structure, the RNAP catalytic core consists of 2 alpha, 1 beta, 1 beta' and 1 omega subunit. When a sigma factor is associated with the core the holoenzyme is formed, which can initiate transcription. Mg(2+) is required as a cofactor. Requires Zn(2+) as cofactor.

It catalyses the reaction RNA(n) + a ribonucleoside 5'-triphosphate = RNA(n+1) + diphosphate. Its function is as follows. DNA-dependent RNA polymerase catalyzes the transcription of DNA into RNA using the four ribonucleoside triphosphates as substrates. The protein is DNA-directed RNA polymerase subunit beta' of Variovorax paradoxus (strain S110).